Here is a 397-residue protein sequence, read N- to C-terminus: 2,3,4,5-tetrahydropyridine-2,6-dicarboxylate N-succinyltransferase (397 aa).

Catalysis depends on Glu265, which acts as the Acyl-anhydride intermediate. Succinyl-CoA contacts are provided by residues Arg267, Gly282, Ser285, Ala308, 323 to 324, Gly331, Lys360, and 373 to 376; these read DA and RQNS.

Belongs to the type 2 tetrahydrodipicolinate N-succinyltransferase family. In terms of assembly, homotrimer.

It is found in the cytoplasm. It carries out the reaction (S)-2,3,4,5-tetrahydrodipicolinate + succinyl-CoA + H2O = (S)-2-succinylamino-6-oxoheptanedioate + CoA. Its pathway is amino-acid biosynthesis; L-lysine biosynthesis via DAP pathway; LL-2,6-diaminopimelate from (S)-tetrahydrodipicolinate (succinylase route): step 1/3. In terms of biological role, catalyzes the conversion of the cyclic tetrahydrodipicolinate (THDP) into the acyclic N-succinyl-L-2-amino-6-oxopimelate using succinyl-CoA. The sequence is that of 2,3,4,5-tetrahydropyridine-2,6-dicarboxylate N-succinyltransferase from Sulfurovum sp. (strain NBC37-1).